The following is a 21-amino-acid chain: Fibrinogen beta chain (21 aa).

Q1 is subject to Pyrrolidone carboxylic acid. Residues 1–11 (QHSTDYDEEEE) are compositionally biased toward acidic residues. The tract at residues 1–21 (QHSTDYDEEEEDRAKLHLDAR) is disordered. An O-linked (GalNAc...) threonine glycan is attached at T4. Y6 is modified (sulfotyrosine). Over residues 12–21 (DRAKLHLDAR) the composition is skewed to basic and acidic residues.

In terms of assembly, heterohexamer; disulfide linked. Contains 2 sets of 3 non-identical chains (alpha, beta and gamma). The 2 heterotrimers are in head to head conformation with the N-termini in a small central domain. Post-translationally, conversion of fibrinogen to fibrin is triggered by thrombin, which cleaves fibrinopeptides A and B from alpha and beta chains, and thus exposes the N-terminal polymerization sites responsible for the formation of the soft clot.

It is found in the secreted. Cleaved by the protease thrombin to yield monomers which, together with fibrinogen alpha (FGA) and fibrinogen gamma (FGG), polymerize to form an insoluble fibrin matrix. Fibrin has a major function in hemostasis as one of the primary components of blood clots. In addition, functions during the early stages of wound repair to stabilize the lesion and guide cell migration during re-epithelialization. Was originally thought to be essential for platelet aggregation, based on in vitro studies using anticoagulated blood. However subsequent studies have shown that it is not absolutely required for thrombus formation in vivo. Enhances expression of SELP in activated platelets. Maternal fibrinogen is essential for successful pregnancy. Fibrin deposition is also associated with infection, where it protects against IFNG-mediated hemorrhage. May also facilitate the antibacterial immune response via both innate and T-cell mediated pathways. This is Fibrinogen beta chain (FGB) from Cervus elaphus (Red deer).